The chain runs to 205 residues: Small ribosomal subunit protein uS4c (205 aa).

Residues 16-40 form a disordered region; sequence GKLPSLTNKTSKKRKSPGQPATSFK. In terms of domain architecture, S4 RNA-binding spans 93–161; the sequence is MRLDNIVHRI…IQKNIESKEL (69 aa).

This sequence belongs to the universal ribosomal protein uS4 family. Part of the 30S ribosomal subunit. Contacts protein S5. The interaction surface between S4 and S5 is involved in control of translational fidelity.

It is found in the plastid. The protein resides in the chloroplast. In terms of biological role, one of the primary rRNA binding proteins, it binds directly to 16S rRNA where it nucleates assembly of the body of the 30S subunit. Its function is as follows. With S5 and S12 plays an important role in translational accuracy. This chain is Small ribosomal subunit protein uS4c (rps4), found in Euglena gracilis.